Here is a 622-residue protein sequence, read N- to C-terminus: Putative DEAD-box ATP-dependent RNA helicase 44 (622 aa).

Residues 50-97 (DRRSIVQISRSNSDNDDGNRPRDVKRERHRSHDHDRNRESDREFRERE) form a disordered region. Over residues 66–97 (DGNRPRDVKRERHRSHDHDRNRESDREFRERE) the composition is skewed to basic and acidic residues. The Helicase ATP-binding domain maps to 241–436 (IPLGLEQRDV…RKFLRNPVVV (196 aa)). Position 254–261 (254–261 (SATGSGKT)) interacts with ATP. The DEAD box motif lies at 367–370 (DEAD). Positions 460-606 (RLKKLIDDLG…LVPPELARHE (147 aa)) constitute a Helicase C-terminal domain.

The protein belongs to the DEAD box helicase family. DDX23/PRP28 subfamily.

It carries out the reaction ATP + H2O = ADP + phosphate + H(+). The chain is Putative DEAD-box ATP-dependent RNA helicase 44 (RH44) from Arabidopsis thaliana (Mouse-ear cress).